A 310-amino-acid polypeptide reads, in one-letter code: Glycine--tRNA ligase alpha subunit (310 aa).

It belongs to the class-II aminoacyl-tRNA synthetase family. As to quaternary structure, tetramer of two alpha and two beta subunits.

It localises to the cytoplasm. The enzyme catalyses tRNA(Gly) + glycine + ATP = glycyl-tRNA(Gly) + AMP + diphosphate. This Aliivibrio salmonicida (strain LFI1238) (Vibrio salmonicida (strain LFI1238)) protein is Glycine--tRNA ligase alpha subunit.